Here is a 180-residue protein sequence, read N- to C-terminus: MAFSFKSFFGGADDEEEEYEDSGYEQQPNQGQQQPVNSQQQNTSNQSYSGYNNQNQNRNGFAYDNGYRQQPKMSAVNSSTQSANNSAKIDSHIALFVPKVFSDAKTIVNQLLLHEAVIVNFSAIDETQSAKIVDFVAGAIYAVEGSIEKISDEIWLIAPNNYAVSGSGSAANSMGRNARF.

Residues M1–G66 are disordered. Acidic residues predominate over residues A12–G23. Over residues Y24–N57 the composition is skewed to low complexity.

The protein belongs to the SepF family. In terms of assembly, homodimer. Interacts with FtsZ.

The protein resides in the cytoplasm. Functionally, cell division protein that is part of the divisome complex and is recruited early to the Z-ring. Probably stimulates Z-ring formation, perhaps through the cross-linking of FtsZ protofilaments. Its function overlaps with FtsA. The polypeptide is Cell division protein SepF (Oenococcus oeni (strain ATCC BAA-331 / PSU-1)).